A 251-amino-acid chain; its full sequence is Triosephosphate isomerase (251 aa).

Substrate is bound at residue 9-11 (NWK). The active-site Electrophile is His-95. The active-site Proton acceptor is the Glu-167. Substrate-binding positions include Gly-173, Ser-212, and 233–234 (GG).

Belongs to the triosephosphate isomerase family. In terms of assembly, homodimer.

The protein localises to the cytoplasm. It carries out the reaction D-glyceraldehyde 3-phosphate = dihydroxyacetone phosphate. It functions in the pathway carbohydrate biosynthesis; gluconeogenesis. The protein operates within carbohydrate degradation; glycolysis; D-glyceraldehyde 3-phosphate from glycerone phosphate: step 1/1. Its function is as follows. Involved in the gluconeogenesis. Catalyzes stereospecifically the conversion of dihydroxyacetone phosphate (DHAP) to D-glyceraldehyde-3-phosphate (G3P). The sequence is that of Triosephosphate isomerase from Pseudomonas entomophila (strain L48).